A 298-amino-acid polypeptide reads, in one-letter code: Putative olfactory receptor 10D4 (298 aa).

The Extracellular segment spans residues 1–23; the sequence is MRNHTMVTEFILLGIPETEGLET. An N-linked (GlcNAc...) asparagine glycan is attached at asparagine 3. Residues 24–44 traverse the membrane as a helical segment; it reads ALLFLFSSFYLCTLLGNVLIL. Topologically, residues 45-52 are cytoplasmic; sequence TAIISSTR. A helical transmembrane segment spans residues 53–73; that stretch reads LHTPMYFFLGNLSIFDLGFSS. The Extracellular segment spans residues 74 to 97; it reads TTVPKMLFYLSGNSHAISYAGCVS. A disulfide bond links cysteine 95 and cysteine 187. A helical transmembrane segment spans residues 98 to 118; the sequence is QLFFYHFLGCTECFLYTVMAC. At 119 to 137 the chain is on the cytoplasmic side; sequence DRFVAICFPLRYTVIMNHR. The chain crosses the membrane as a helical span at residues 138 to 158; the sequence is VCFMLATGTWMIGCVHAMILT. Residues 159–195 lie on the Extracellular side of the membrane; that stretch reads PLTFQLPYCGPNKVGYYFCDIPAVLPLACKDTSLAQR. A helical membrane pass occupies residues 196–215; that stretch reads VGFTNVGLLSLICFFLILVS. Residues 216–235 are Cytoplasmic-facing; sequence YTCIGISISKIRSAEGRQRA. Residues 236-256 traverse the membrane as a helical segment; the sequence is FSTCSAHLTAILCAYGPVIVI. Over 257–267 the chain is Extracellular; it reads YLQPNPSALLG. The helical transmembrane segment at 268–288 threads the bilayer; it reads SIIQILNNLVTPMLNPLIYSL. Residues 289 to 298 lie on the Cytoplasmic side of the membrane; sequence RNKDVKSDQP.

The protein belongs to the G-protein coupled receptor 1 family.

It localises to the cell membrane. Functionally, odorant receptor. This is Putative olfactory receptor 10D4 (OR10D4P) from Homo sapiens (Human).